The following is a 128-amino-acid chain: Large ribosomal subunit protein uL22 (128 aa).

Belongs to the universal ribosomal protein uL22 family. In terms of assembly, part of the 50S ribosomal subunit.

In terms of biological role, this protein binds specifically to 23S rRNA; its binding is stimulated by other ribosomal proteins, e.g. L4, L17, and L20. It is important during the early stages of 50S assembly. It makes multiple contacts with different domains of the 23S rRNA in the assembled 50S subunit and ribosome. The globular domain of the protein is located near the polypeptide exit tunnel on the outside of the subunit, while an extended beta-hairpin is found that lines the wall of the exit tunnel in the center of the 70S ribosome. The chain is Large ribosomal subunit protein uL22 from Prochlorococcus marinus (strain AS9601).